Consider the following 72-residue polypeptide: Translation initiation factor IF-1 (72 aa).

Positions 1–72 (MAKEDNIEMQ…SKGRIVFRSR (72 aa)) constitute an S1-like domain.

This sequence belongs to the IF-1 family. In terms of assembly, component of the 30S ribosomal translation pre-initiation complex which assembles on the 30S ribosome in the order IF-2 and IF-3, IF-1 and N-formylmethionyl-tRNA(fMet); mRNA recruitment can occur at any time during PIC assembly.

The protein resides in the cytoplasm. In terms of biological role, one of the essential components for the initiation of protein synthesis. Stabilizes the binding of IF-2 and IF-3 on the 30S subunit to which N-formylmethionyl-tRNA(fMet) subsequently binds. Helps modulate mRNA selection, yielding the 30S pre-initiation complex (PIC). Upon addition of the 50S ribosomal subunit IF-1, IF-2 and IF-3 are released leaving the mature 70S translation initiation complex. This is Translation initiation factor IF-1 from Shewanella loihica (strain ATCC BAA-1088 / PV-4).